A 362-amino-acid chain; its full sequence is F-box protein At1g54550 (362 aa).

The F-box domain maps to 1–47 (MATVTDLPDDLVREIFSRVPLTSLRAVRSTCKKWNAISKYDILGKKA).

The chain is F-box protein At1g54550 from Arabidopsis thaliana (Mouse-ear cress).